The chain runs to 220 residues: Imidazoleglycerol-phosphate dehydratase (220 aa).

It belongs to the imidazoleglycerol-phosphate dehydratase family.

It carries out the reaction D-erythro-1-(imidazol-4-yl)glycerol 3-phosphate = 3-(imidazol-4-yl)-2-oxopropyl phosphate + H2O. Its pathway is amino-acid biosynthesis; L-histidine biosynthesis; L-histidine from 5-phospho-alpha-D-ribose 1-diphosphate: step 6/9. The sequence is that of Imidazoleglycerol-phosphate dehydratase (HIS3) from Eremothecium gossypii (strain ATCC 10895 / CBS 109.51 / FGSC 9923 / NRRL Y-1056) (Yeast).